The chain runs to 150 residues: CCAAT/enhancer-binding protein gamma (150 aa).

Lys3 participates in a covalent cross-link: Glycyl lysine isopeptide (Lys-Gly) (interchain with G-Cter in SUMO2). Residues Gly27–Val94 form a disordered region. The segment covering Leu28–Ala37 has biased composition (low complexity). Residues Ser56–Asn72 show a composition bias toward basic and acidic residues. A bZIP domain is found at Ser62–His125. The basic motif stretch occupies residues Arg66–Arg93. A leucine-zipper region spans residues Leu97–Leu118.

The protein belongs to the bZIP family. C/EBP subfamily. As to quaternary structure, binds DNA as a dimer and can form stable heterodimers with CEBPA and CEBPB. Interacts with ZNF638; this interaction increases transcriptional activation.

It localises to the nucleus. In terms of biological role, transcription factor that binds to the promoter and the enhancer regions of target genes. Binds to the promoter and the enhancer of the alpha-1-fetoprotein gene. Binds to the enhancer element PRE-I (positive regulatory element-I) of the IL-4 gene. Binds to the promoter and the enhancer of the immunoglobulin heavy chain. Binds to GPE1, a cis-acting element in the G-CSF gene promoter. This chain is CCAAT/enhancer-binding protein gamma (Cebpg), found in Rattus norvegicus (Rat).